A 452-amino-acid chain; its full sequence is Trigger factor (452 aa).

Residues 170–256 (DSIVKVDFVE…IKSIKKRDLP (87 aa)) form the PPIase FKBP-type domain.

This sequence belongs to the FKBP-type PPIase family. Tig subfamily.

The protein localises to the cytoplasm. It catalyses the reaction [protein]-peptidylproline (omega=180) = [protein]-peptidylproline (omega=0). Functionally, involved in protein export. Acts as a chaperone by maintaining the newly synthesized protein in an open conformation. Functions as a peptidyl-prolyl cis-trans isomerase. The protein is Trigger factor of Borreliella afzelii (strain PKo) (Borrelia afzelii).